A 112-amino-acid chain; its full sequence is ATP-dependent Clp protease adapter protein ClpS (112 aa).

This sequence belongs to the ClpS family. As to quaternary structure, binds to the N-terminal domain of the chaperone ClpA.

Involved in the modulation of the specificity of the ClpAP-mediated ATP-dependent protein degradation. This is ATP-dependent Clp protease adapter protein ClpS from Rhodococcus opacus (strain B4).